A 247-amino-acid polypeptide reads, in one-letter code: GTP cyclohydrolase 1 type 2 homolog (247 aa).

Residues histidine 63, histidine 64, aspartate 101, histidine 215, and glutamate 219 each contribute to the a divalent metal cation site.

It belongs to the GTP cyclohydrolase I type 2/NIF3 family. Toroid-shaped homohexamer. In the hexamer, 3 dimers assemble to form a ring-like structure surrounding a central hole.

Provides significant protection from radiation damage and may be involved in the degradation of radiation-damaged nucleotides. This is GTP cyclohydrolase 1 type 2 homolog (ybgI) from Salmonella typhi.